The chain runs to 305 residues: Putative cuticle collagen 90 (305 aa).

Disordered stretches follow at residues 95–117 (AGPP…GDLG) and 146–305 (PPGQ…AKRH). 4 triple-helical region regions span residues 96–125 (GPPG…SGIS), 142–204 (GPAG…PGTA), 208–252 (GAVG…NGRD), and 256–270 (GQPG…VGKD). Positions 150-162 (QGPVGPQGFPGVV) are enriched in low complexity. Basic and acidic residues predominate over residues 278-288 (ARRDSKTESVH).

It belongs to the cuticular collagen family. In terms of assembly, collagen polypeptide chains are complexed within the cuticle by disulfide bonds and other types of covalent cross-links.

Nematode cuticles are composed largely of collagen-like proteins. The cuticle functions both as an exoskeleton and as a barrier to protect the worm from its environment. This chain is Putative cuticle collagen 90 (col-90), found in Caenorhabditis elegans.